A 359-amino-acid polypeptide reads, in one-letter code: Serine/threonine-protein kinase SAPK7 (359 aa).

Residues 4–260 (YELLKDIGAG…IREIRNHPWF (257 aa)) enclose the Protein kinase domain. ATP is bound by residues 10–18 (IGAGNFGVA) and Lys-33. The active-site Proton acceptor is the Asp-123. The disordered stretch occupies residues 299 to 359 (EEARTPPRSS…VHASGEFQLS (61 aa)). The segment covering 331-343 (EEQEEEEDAEDEY) has biased composition (acidic residues).

Belongs to the protein kinase superfamily. Ser/Thr protein kinase family. In terms of processing, may be phosphorylated. As to expression, weakly expressed in roots. Expressed in roots of young seedlings.

It localises to the cytoplasm. The protein localises to the nucleus. It catalyses the reaction L-seryl-[protein] + ATP = O-phospho-L-seryl-[protein] + ADP + H(+). The catalysed reaction is L-threonyl-[protein] + ATP = O-phospho-L-threonyl-[protein] + ADP + H(+). With respect to regulation, activated by hyperosmotic stress. May play a role in signal transduction of hyperosmotic response. This is Serine/threonine-protein kinase SAPK7 (SAPK7) from Oryza sativa subsp. japonica (Rice).